Here is a 160-residue protein sequence, read N- to C-terminus: Protein FrzA (160 aa).

The CheW-like domain occupies 14–155 (EQEFFCFRVG…FSKLLQTARQ (142 aa)).

Necessary for proper aggregation of cells to form fruiting bodies. FRZ genes define a system of signal transduction analogous to the enterobacterial chemotaxis systems. In Myxococcus xanthus, this protein is Protein FrzA (frzA).